We begin with the raw amino-acid sequence, 161 residues long: Small ribosomal subunit protein uS9 (161 aa).

Belongs to the universal ribosomal protein uS9 family.

This Bartonella tribocorum (strain CIP 105476 / IBS 506) protein is Small ribosomal subunit protein uS9.